A 1190-amino-acid polypeptide reads, in one-letter code: Pumilio homolog 1 (1190 aa).

4 disordered regions span residues 38–74, 491–531, 611–675, and 744–777; these read LTSGPVGQQQPPQPPTHSALATGPHASPVGGSMGVAG, SNSA…QQTD, ANGP…NSSL, and GPVGMPLPSQGPSHSQTPPPSLSSHGSSTSLNLG. Composition is skewed to low complexity over residues 491 to 508, 518 to 531, 628 to 675, and 765 to 777; these read SNSASQQNNPQSQQGQQQ, PLTPNQNQQGQQTD, QQPQ…NSSL, and LSSHGSSTSLNLG. In terms of domain architecture, PUM-HD spans 830–1172; sequence GRSRLLEDFR…HILAKLEKYY (343 aa). 8 Pumilio repeats span residues 850-885, 886-921, 922-959, 960-995, 996-1031, 1032-1067, 1068-1103, and 1107-1146; these read EIAGHIMEFSQDQHGSRFIQLKLERATPAERQLVFN, EILQAAYQLMVDVFGNYVIQKFFEFGSLEQKLALAE, RIRGHVLSLALQMYGCRVIQKALEFIPPDQQVINEMVR, ELDGHVLKCVKDQNGNHVVQKCIECVQPQSLQFIID, AFKSQVFALSTHPYGCRVIQRILEHCLPEQTLPILE, ELHQHTEQLVQDQYGNYVIQHVLEHGRPEDKSKIVA, EIRGNVLVLSQHKFASNVVEKCVTHASRTERAMLID, and TMNDGPHSALYTMMKDQYANYVVQKMIDVAEPAQRKIVMH. The interval 865–869 is adenine-nucleotide binding in RNA target; sequence SRFIQ. Residues 901 to 905 are uracil-nucleotide binding in RNA target; that stretch reads NYVIQ. The tract at residues 937-941 is adenine-nucleotide binding in RNA target; sequence CRVIQ. The interval 975–979 is non-specific-nucleotide binding in RNA target; the sequence is NHVVQ. Residues 1011-1015 form an adenine-nucleotide binding in RNA target region; that stretch reads CRVIQ. Residues 1047 to 1051 form a uracil-nucleotide binding in RNA target region; sequence NYVIQ. The interval 1083–1087 is guanine-nucleotide binding in RNA target; it reads SNVVE. Residues 1126–1130 are uracil-nucleotide binding in RNA target; the sequence is NYVVQ.

In terms of assembly, interacts with cpeb1-a; interacts with unphosphorylated cpeb1-a but not phosphorylated. Component of a complex with papd4, sympk, tacc3, parn, dazl and cpeb1. In terms of processing, phosphorylated. Phosphorylation takes place at the time of dissociation of cpeb1-a from pum1 and the translational activation of ccnb1 mRNA. In terms of tissue distribution, present in oocytes (at protein level).

Its subcellular location is the cytoplasm. The protein localises to the P-body. It is found in the cytoplasmic granule. Functionally, sequence-specific RNA-binding protein that acts as a post-transcriptional repressor by binding the 3'-UTR of mRNA targets. Binds to an RNA consensus sequence, the Pumilio Response Element (PRE), 5'-UGUANAUA-3', that is related to the Nanos Response Element (NRE). Mediates post-transcriptional repression of transcripts via different mechanisms: acts via direct recruitment of deadenylase complexes leading to translational inhibition and mRNA degradation. Also mediates deadenylation-independent repression by promoting accessibility of miRNAs. Acts as a post-transcriptional repressor of ccnb1 mRNA during oocyte maturation. The polypeptide is Pumilio homolog 1 (Xenopus laevis (African clawed frog)).